We begin with the raw amino-acid sequence, 516 residues long: Serine carboxypeptidase II-3 (516 aa).

The first 20 residues, 1-20 (MKCTVVALVLLVAVQCLVLG), serve as a signal peptide directing secretion. Residues 21–77 (AGPAAAAKARRTRQGDYLNRLRGSPSSRASWESLAAVEEQTTTKAAGRPAPVAAAVE) constitute a propeptide that is removed on maturation. 3 disulfides stabilise this stretch: cysteine 143–cysteine 391, cysteine 300–cysteine 315, and cysteine 339–cysteine 359. N-linked (GlcNAc...) asparagine glycans are attached at residues asparagine 194 and asparagine 205. Residue serine 236 is part of the active site. Asparagine 301 carries an N-linked (GlcNAc...) asparagine glycan. The propeptide at 342 to 352 (EKLVTPPIAPS) is linker peptide. Asparagine 380 is a glycosylation site (N-linked (GlcNAc...) asparagine). Active-site residues include aspartate 427 and histidine 484.

It belongs to the peptidase S10 family. Carboxypeptidase II is a dimer, where each monomer is composed of two chains linked by a disulfide bond. The linker peptide is endoproteolytically excised during enzyme maturation.

It catalyses the reaction Preferential release of a C-terminal arginine or lysine residue.. This chain is Serine carboxypeptidase II-3 (CXP;2-3), found in Hordeum vulgare (Barley).